The primary structure comprises 117 residues: MSNIIKALEQEQMKQDLPQFAPGDTVVVQVKVKEGDRERLQAFEGIVIAIRNRGLHSAFTVRKISNGEGVERTFQTHSPVVDSIEVKRRGAVRRAKLYYLRDLSGKAARIKEKLAKK.

The protein belongs to the bacterial ribosomal protein bL19 family.

Functionally, this protein is located at the 30S-50S ribosomal subunit interface and may play a role in the structure and function of the aminoacyl-tRNA binding site. In Vibrio cholerae serotype O1 (strain ATCC 39541 / Classical Ogawa 395 / O395), this protein is Large ribosomal subunit protein bL19.